Here is a 398-residue protein sequence, read N- to C-terminus: Elongation factor Tu (398 aa).

Positions 10-207 (KPHVNIGTIG…TVDSYIPEPE (198 aa)) constitute a tr-type G domain. The G1 stretch occupies residues 19–26 (GHVDHGKT). Position 19 to 26 (19 to 26 (GHVDHGKT)) interacts with GTP. T26 serves as a coordination point for Mg(2+). The G2 stretch occupies residues 63 to 67 (GITIN). The tract at residues 84-87 (DAPG) is G3. GTP contacts are provided by residues 84 to 88 (DAPGH) and 139 to 142 (NKVD). The interval 139-142 (NKVD) is G4. Residues 177-179 (SAL) form a G5 region.

This sequence belongs to the TRAFAC class translation factor GTPase superfamily. Classic translation factor GTPase family. EF-Tu/EF-1A subfamily. Monomer.

It localises to the cytoplasm. It catalyses the reaction GTP + H2O = GDP + phosphate + H(+). GTP hydrolase that promotes the GTP-dependent binding of aminoacyl-tRNA to the A-site of ribosomes during protein biosynthesis. The chain is Elongation factor Tu from Streptococcus pyogenes serotype M28 (strain MGAS6180).